We begin with the raw amino-acid sequence, 157 residues long: Endoribonuclease YbeY (157 aa).

His-113, His-117, and His-123 together coordinate Zn(2+).

This sequence belongs to the endoribonuclease YbeY family. The cofactor is Zn(2+).

The protein localises to the cytoplasm. Functionally, single strand-specific metallo-endoribonuclease involved in late-stage 70S ribosome quality control and in maturation of the 3' terminus of the 16S rRNA. The polypeptide is Endoribonuclease YbeY (Ehrlichia ruminantium (strain Gardel)).